The chain runs to 177 residues: Peptide methionine sulfoxide reductase MsrA (177 aa).

The active site involves Cys11.

Belongs to the MsrA Met sulfoxide reductase family.

The catalysed reaction is L-methionyl-[protein] + [thioredoxin]-disulfide + H2O = L-methionyl-(S)-S-oxide-[protein] + [thioredoxin]-dithiol. It carries out the reaction [thioredoxin]-disulfide + L-methionine + H2O = L-methionine (S)-S-oxide + [thioredoxin]-dithiol. Has an important function as a repair enzyme for proteins that have been inactivated by oxidation. Catalyzes the reversible oxidation-reduction of methionine sulfoxide in proteins to methionine. This Trichodesmium erythraeum (strain IMS101) protein is Peptide methionine sulfoxide reductase MsrA.